Consider the following 409-residue polypeptide: Dihydrolipoyllysine-residue succinyltransferase component of 2-oxoglutarate dehydrogenase complex (409 aa).

Positions 2–77 (AIEILVPDLP…VSKQLLGKIS (76 aa)) constitute a Lipoyl-binding domain. At lysine 43 the chain carries N6-lipoyllysine. Polar residues predominate over residues 83–107 (DVSSATLKATNEPTPSDRQNAAIEN). The tract at residues 83-114 (DVSSATLKATNEPTPSDRQNAAIENSHNHNAD) is disordered. A Peripheral subunit-binding (PSBD) domain is found at 114–151 (DQSPVIRRLLAEHDLQADQIQGSGVGGRLTREDIEREI). Active-site residues include histidine 380 and aspartate 384.

Belongs to the 2-oxoacid dehydrogenase family. As to quaternary structure, forms a 24-polypeptide structural core with octahedral symmetry. Part of the 2-oxoglutarate dehydrogenase (OGDH) complex composed of E1 (2-oxoglutarate dehydrogenase), E2 (dihydrolipoamide succinyltransferase) and E3 (dihydrolipoamide dehydrogenase); the complex contains multiple copies of the three enzymatic components (E1, E2 and E3). (R)-lipoate serves as cofactor.

It carries out the reaction N(6)-[(R)-dihydrolipoyl]-L-lysyl-[protein] + succinyl-CoA = N(6)-[(R)-S(8)-succinyldihydrolipoyl]-L-lysyl-[protein] + CoA. The protein operates within amino-acid degradation; L-lysine degradation via saccharopine pathway; glutaryl-CoA from L-lysine: step 6/6. E2 component of the 2-oxoglutarate dehydrogenase (OGDH) complex which catalyzes the second step in the conversion of 2-oxoglutarate to succinyl-CoA and CO(2). This Haemophilus influenzae (strain ATCC 51907 / DSM 11121 / KW20 / Rd) protein is Dihydrolipoyllysine-residue succinyltransferase component of 2-oxoglutarate dehydrogenase complex (sucB).